The primary structure comprises 86 residues: Large ribosomal subunit protein bL31 (86 aa).

Positions 66–86 are disordered; the sequence is GMGSADSATSQETKEAKESDK. Basic and acidic residues predominate over residues 77–86; the sequence is ETKEAKESDK.

It belongs to the bacterial ribosomal protein bL31 family. Type A subfamily. In terms of assembly, part of the 50S ribosomal subunit.

In terms of biological role, binds the 23S rRNA. This chain is Large ribosomal subunit protein bL31, found in Prochlorococcus marinus (strain MIT 9515).